We begin with the raw amino-acid sequence, 177 residues long: MSRVAKAPVVIPAGVEVKLNGQVISIKGKNGELTRTVHNAVEVKQEANALTFAPREGFANAWAQAGTTRALLNAMVVGVTEGFTKKLQLVGVGYRAAVKGNVVNLALGFSHPVDHQLPAGITAECPSQTEIVLKGADKQVIGQVAADLRAYRRPEPYKGKGVRYADEVVRTKEAKKK.

The protein belongs to the universal ribosomal protein uL6 family. Part of the 50S ribosomal subunit.

In terms of biological role, this protein binds to the 23S rRNA, and is important in its secondary structure. It is located near the subunit interface in the base of the L7/L12 stalk, and near the tRNA binding site of the peptidyltransferase center. This Serratia proteamaculans (strain 568) protein is Large ribosomal subunit protein uL6.